The sequence spans 100 residues: Large ribosomal subunit protein uL23 (100 aa).

Belongs to the universal ribosomal protein uL23 family. Part of the 50S ribosomal subunit. Contacts protein L29, and trigger factor when it is bound to the ribosome.

Functionally, one of the early assembly proteins it binds 23S rRNA. One of the proteins that surrounds the polypeptide exit tunnel on the outside of the ribosome. Forms the main docking site for trigger factor binding to the ribosome. The protein is Large ribosomal subunit protein uL23 of Mycobacterium ulcerans (strain Agy99).